Consider the following 1162-residue polypeptide: Integrin alpha-L (1162 aa).

The signal sequence occupies residues 1-23 (MSFRIAGPRLLLLGLQLFAKAWS). Over 24–1088 (YNLDTRPTQS…DLIHEKEMLH (1065 aa)) the chain is Extracellular. FG-GAP repeat units follow at residues 28–79 (TRPT…FCQP) and 80–138 (VSLH…GPML). An intrachain disulfide couples Cys70 to Cys77. Asn86 carries N-linked (GlcNAc...) asparagine glycosylation. 2 disulfides stabilise this stretch: Cys108–Cys126 and Cys147–Cys199. The 173-residue stretch at 153-325 (DLVFLFDGSQ…EKLKDLFTDL (173 aa)) folds into the VWFA domain. N-linked (GlcNAc...) asparagine glycans are attached at residues Asn185 and Asn270. 5 FG-GAP repeats span residues 336 to 387 (NRQD…GATF), 390 to 443 (QEPL…GGRW), 444 to 504 (NQTQ…LFEM), 505 to 561 (VSEL…GLSP), and 565 to 625 (QRIQ…FSPE). An N-linked (GlcNAc...) asparagine glycan is attached at Asn444. Residues Asp466, Asp468, Asp470, Glu474, Asp528, Asn530, Asp532, Asp536, Asp588, Asp592, and Asp596 each contribute to the Ca(2+) site. The cysteines at positions 651 and 705 are disulfide-linked. N-linked (GlcNAc...) asparagine glycans are attached at residues Asn668, Asn696, Asn724, and Asn728. Cysteines 768 and 774 form a disulfide. Asn777 carries N-linked (GlcNAc...) asparagine glycosylation. Residues Cys841 and Cys857 are joined by a disulfide bond. N-linked (GlcNAc...) asparagine glycosylation is found at Asn858, Asn881, Asn891, Asn900, and Asn928. Intrachain disulfides connect Cys994–Cys1010 and Cys1018–Cys1049. N-linked (GlcNAc...) asparagine glycosylation is present at Asn1057. Residues 1089–1109 (VYVLSGIGGLVLLFLIFLALY) traverse the membrane as a helical segment. At 1110-1162 (KVGFFKRNLKEKMEADGGVPNGSPPEDTDPLAVPGEETKDMGCLEPLRESDKD) the chain is on the cytoplasmic side. Positions 1112-1116 (GFFKR) match the GFFKR motif motif. Residues 1124–1162 (ADGGVPNGSPPEDTDPLAVPGEETKDMGCLEPLRESDKD) form a disordered region. The segment covering 1145-1162 (EETKDMGCLEPLRESDKD) has biased composition (basic and acidic residues).

The protein belongs to the integrin alpha chain family. In terms of assembly, heterodimer of an alpha and a beta subunit. The ITGAL alpha subunit associates with the ITGB2 beta subunit. Interacts with THBD. Interacts with CD226. Post-translationally, in resting T-cells, up to 40% of surface ITGAL is constitutively phosphorylated. Phosphorylation causes conformational changes needed for ligand binding and is necessary for the activation by some physiological agents. In terms of tissue distribution, leukocytes.

Its subcellular location is the cell membrane. Functionally, integrin ITGAL/ITGB2 is a receptor for ICAM1, ICAM2, ICAM3 and ICAM4. Integrin ITGAL/ITGB2 is a receptor for F11R. Integrin ITGAL/ITGB2 is a receptor for the secreted form of ubiquitin-like protein ISG15; the interaction is mediated by ITGAL. Involved in a variety of immune phenomena including leukocyte-endothelial cell interaction, cytotoxic T-cell mediated killing, and antibody dependent killing by granulocytes and monocytes. Contributes to natural killer cell cytotoxicity. Involved in leukocyte adhesion and transmigration of leukocytes including T-cells and neutrophils. Acts as a platform at the immunological synapse to translate TCR engagement and density of the ITGAL ligand ICAM1 into graded adhesion. Required for generation of common lymphoid progenitor cells in bone marrow, indicating the role in lymphopoiesis. Integrin ITGAL/ITGB2 in association with ICAM3, contributes to apoptotic neutrophil phagocytosis by macrophages. In Mus musculus (Mouse), this protein is Integrin alpha-L.